A 542-amino-acid chain; its full sequence is Phosphoacetylglucosamine mutase (542 aa).

M1 is modified (N-acetylmethionine). T62 carries the phosphothreonine modification. S64 acts as the Phosphoserine intermediate in catalysis. Mg(2+) is bound by residues S64, D276, D278, and D280. S64 carries the post-translational modification Phosphoserine. Substrate-binding positions include 370 to 372, 496 to 500, and R505; these read EAN and RPSGT.

It belongs to the phosphohexose mutase family. Mg(2+) serves as cofactor. As to expression, found in many tissues except lung. Relatively high expression in pancreas, heart, liver, and placenta, and relatively low expression in brain, skeletal muscle and kidney.

The catalysed reaction is N-acetyl-alpha-D-glucosamine 1-phosphate = N-acetyl-D-glucosamine 6-phosphate. It participates in nucleotide-sugar biosynthesis; UDP-N-acetyl-alpha-D-glucosamine biosynthesis; N-acetyl-alpha-D-glucosamine 1-phosphate from alpha-D-glucosamine 6-phosphate (route I): step 2/2. Functionally, catalyzes the conversion of GlcNAc-6-P into GlcNAc-1-P during the synthesis of uridine diphosphate/UDP-GlcNAc, a sugar nucleotide critical to multiple glycosylation pathways including protein N- and O-glycosylation. In Homo sapiens (Human), this protein is Phosphoacetylglucosamine mutase.